Reading from the N-terminus, the 109-residue chain is Protein reprimo (109 aa).

2 N-linked (GlcNAc...) asparagine glycosylation sites follow: Asn7 and Asn18. Residues 56–76 (VVQIAVMCVLSLTVVFGIFFL) form a helical membrane-spanning segment. Position 98 is a phosphoserine (Ser98).

This sequence belongs to the reprimo family.

The protein localises to the cytoplasm. It is found in the membrane. In terms of biological role, may be involved in the regulation of p53-dependent G2 arrest of the cell cycle. Seems to induce cell cycle arrest by inhibiting CDK1 activity and nuclear translocation of the CDC2 cyclin B1 complex. The polypeptide is Protein reprimo (RPRM) (Homo sapiens (Human)).